A 333-amino-acid chain; its full sequence is Syntaxin-4 (333 aa).

At 1–312 the chain is on the cytoplasmic side; that stretch reads MGKDRLPELL…QHQKKARKKK (312 aa). Low complexity predominate over residues 50–66; the sequence is YSVVSQNSHSCSNNNSS. The disordered stretch occupies residues 50 to 81; the sequence is YSVVSQNSHSCSNNNSSTEPKDRSSSKMTQYG. The stretch at 91 to 116 forms a coiled coil; the sequence is YTEIRQQLAQIAANLETMNRMAQTVN. A t-SNARE coiled-coil homology domain is found at 239-301; the sequence is LREMMDRFNE…DKGADELDQA (63 aa). A helical; Anchor for type IV membrane protein transmembrane segment spans residues 313-333; that stretch reads IMLIVILAAVLLVLLLVGIYL.

It belongs to the syntaxin family.

The protein localises to the membrane. Its function is as follows. Potentially involved in docking of synaptic vesicles at presynaptic active zones. The chain is Syntaxin-4 from Drosophila melanogaster (Fruit fly).